Consider the following 156-residue polypeptide: Small ribosomal subunit protein uS7 (156 aa).

Belongs to the universal ribosomal protein uS7 family. Part of the 30S ribosomal subunit. Contacts proteins S9 and S11.

Functionally, one of the primary rRNA binding proteins, it binds directly to 16S rRNA where it nucleates assembly of the head domain of the 30S subunit. Is located at the subunit interface close to the decoding center, probably blocks exit of the E-site tRNA. The chain is Small ribosomal subunit protein uS7 from Proteus mirabilis (strain HI4320).